Here is a 293-residue protein sequence, read N- to C-terminus: Xylanase inhibitor protein XIP (293 aa).

The signal sequence occupies residues 1 to 21 (MALRRLAALLSLAVLLSAGLA). One can recognise a GH18 domain in the interval 31 to 293 (GDTVIIWGRN…DKKTGFTAHL (263 aa)). Disulfide bonds link C50/C92 and C189/C218.

It belongs to the glycosyl hydrolase 18 family. Xylanase inhibitor subfamily. Expressed in mature grain.

The protein resides in the secreted. Functionally, fungal xylanase inhibitor. Possesses competitive inhibiting activity against several fungal endo-1,4-beta-D-xylanases belonging to glycoside hydrolase family 10 (GH10) and family 11 (GH11). May function in plant defense against secreted fungal pathogen xylanases. Is similar to class III chitinases, but does not exhibit chitinase activity. This is Xylanase inhibitor protein XIP from Oryza sativa subsp. japonica (Rice).